The chain runs to 761 residues: RNA-binding protein mde7 (761 aa).

3 stretches are compositionally biased toward polar residues: residues 31–46 (PNHS…NSLL), 58–83 (SRNS…TTPF), and 99–110 (SRNNSYLQGTAE). Disordered regions lie at residues 31–110 (PNHS…GTAE) and 188–213 (HYFD…EASN). Residues 188-197 (HYFDDTDKSV) are compositionally biased toward basic and acidic residues. Low complexity predominate over residues 199-211 (SKSSSGSNSLSEA). Residues 223–289 (IVGGLPDDFD…SSTNNFTIIQ (67 aa)) enclose the RRM 1 domain. A compositionally biased stretch (polar residues) spans 442 to 466 (ESNSLSNQPNNFAQTSFDYQPNHPN). The segment at 442–468 (ESNSLSNQPNNFAQTSFDYQPNHPNAI) is disordered. One can recognise an RRM 2 domain in the interval 602–679 (NTIYVGNLSN…GGIRLSYSKN (78 aa)).

The protein is RNA-binding protein mde7 (mde7) of Schizosaccharomyces pombe (strain 972 / ATCC 24843) (Fission yeast).